The following is a 67-amino-acid chain: ATP synthase F(0) complex subunit 8 (67 aa).

Residues 8-24 (TWFITILSMLITLFILF) form a helical membrane-spanning segment. Residue Lys54 is modified to N6-acetyllysine; alternate. At Lys54 the chain carries N6-succinyllysine; alternate. Lys57 is modified (N6-acetyllysine).

Belongs to the ATPase protein 8 family. Component of the ATP synthase complex composed at least of ATP5F1A/subunit alpha, ATP5F1B/subunit beta, ATP5MC1/subunit c (homooctomer), MT-ATP6/subunit a, MT-ATP8/subunit 8, ATP5ME/subunit e, ATP5MF/subunit f, ATP5MG/subunit g, ATP5MK/subunit k, ATP5MJ/subunit j, ATP5F1C/subunit gamma, ATP5F1D/subunit delta, ATP5F1E/subunit epsilon, ATP5PF/subunit F6, ATP5PB/subunit b, ATP5PD/subunit d, ATP5PO/subunit OSCP. ATP synthase complex consists of a soluble F(1) head domain (subunits alpha(3) and beta(3)) - the catalytic core - and a membrane F(0) domain - the membrane proton channel (subunits c, a, 8, e, f, g, k and j). These two domains are linked by a central stalk (subunits gamma, delta, and epsilon) rotating inside the F1 region and a stationary peripheral stalk (subunits F6, b, d, and OSCP). Interacts with PRICKLE3.

It is found in the mitochondrion membrane. Subunit 8, of the mitochondrial membrane ATP synthase complex (F(1)F(0) ATP synthase or Complex V) that produces ATP from ADP in the presence of a proton gradient across the membrane which is generated by electron transport complexes of the respiratory chain. ATP synthase complex consist of a soluble F(1) head domain - the catalytic core - and a membrane F(1) domain - the membrane proton channel. These two domains are linked by a central stalk rotating inside the F(1) region and a stationary peripheral stalk. During catalysis, ATP synthesis in the catalytic domain of F(1) is coupled via a rotary mechanism of the central stalk subunits to proton translocation. In vivo, can only synthesize ATP although its ATP hydrolase activity can be activated artificially in vitro. Part of the complex F(0) domain. The protein is ATP synthase F(0) complex subunit 8 of Dugong dugon (Dugong).